Here is a 213-residue protein sequence, read N- to C-terminus: MKREDLQLYFIMGTSNVSHQEPLVVLEKALRAGITMFQLREKGPYALTGLAYEQFARQCQQLCQHYHVPFIVNDDVDLAVRLGADGVHIGQDDEQIAIARKKMANRILGVSVHSQEELQIAIDHHADYVGIGPIFATTSKSDAQPPCGTNFLQQASKLQPNLPIVAIGGINGINADIVFQAGADGVAVISALCESEDIEQTVSIFKSLNRIKR.

Residues 38–42 and Asn-73 contribute to the 4-amino-2-methyl-5-(diphosphooxymethyl)pyrimidine site; that span reads QLREK. Residues Asp-74 and Asp-93 each coordinate Mg(2+). A 4-amino-2-methyl-5-(diphosphooxymethyl)pyrimidine-binding site is contributed by Ser-111. 2-[(2R,5Z)-2-carboxy-4-methylthiazol-5(2H)-ylidene]ethyl phosphate is bound at residue 137 to 139; the sequence is TTS. Residue Lys-140 participates in 4-amino-2-methyl-5-(diphosphooxymethyl)pyrimidine binding. Residues Gly-169 and 189-190 each bind 2-[(2R,5Z)-2-carboxy-4-methylthiazol-5(2H)-ylidene]ethyl phosphate; that span reads IS.

The protein belongs to the thiamine-phosphate synthase family. The cofactor is Mg(2+).

It carries out the reaction 2-[(2R,5Z)-2-carboxy-4-methylthiazol-5(2H)-ylidene]ethyl phosphate + 4-amino-2-methyl-5-(diphosphooxymethyl)pyrimidine + 2 H(+) = thiamine phosphate + CO2 + diphosphate. It catalyses the reaction 2-(2-carboxy-4-methylthiazol-5-yl)ethyl phosphate + 4-amino-2-methyl-5-(diphosphooxymethyl)pyrimidine + 2 H(+) = thiamine phosphate + CO2 + diphosphate. The enzyme catalyses 4-methyl-5-(2-phosphooxyethyl)-thiazole + 4-amino-2-methyl-5-(diphosphooxymethyl)pyrimidine + H(+) = thiamine phosphate + diphosphate. It participates in cofactor biosynthesis; thiamine diphosphate biosynthesis; thiamine phosphate from 4-amino-2-methyl-5-diphosphomethylpyrimidine and 4-methyl-5-(2-phosphoethyl)-thiazole: step 1/1. Functionally, condenses 4-methyl-5-(beta-hydroxyethyl)thiazole monophosphate (THZ-P) and 2-methyl-4-amino-5-hydroxymethyl pyrimidine pyrophosphate (HMP-PP) to form thiamine monophosphate (TMP). The sequence is that of Thiamine-phosphate synthase from Lysinibacillus sphaericus (strain C3-41).